A 317-amino-acid chain; its full sequence is Ribosomal protein L11 methyltransferase (317 aa).

S-adenosyl-L-methionine-binding residues include Thr158, Gly179, Asp201, and Asn244.

Belongs to the methyltransferase superfamily. PrmA family.

It is found in the cytoplasm. The catalysed reaction is L-lysyl-[protein] + 3 S-adenosyl-L-methionine = N(6),N(6),N(6)-trimethyl-L-lysyl-[protein] + 3 S-adenosyl-L-homocysteine + 3 H(+). In terms of biological role, methylates ribosomal protein L11. The chain is Ribosomal protein L11 methyltransferase from Streptococcus pyogenes serotype M3 (strain ATCC BAA-595 / MGAS315).